The following is a 163-amino-acid chain: UPF0262 protein RPC_4416 (163 aa).

It belongs to the UPF0262 family.

This chain is UPF0262 protein RPC_4416, found in Rhodopseudomonas palustris (strain BisB18).